Consider the following 199-residue polypeptide: 7-methyl-GTP pyrophosphatase (199 aa).

Residue Asp76 is the Proton acceptor of the active site.

Belongs to the Maf family. YceF subfamily. It depends on a divalent metal cation as a cofactor.

The protein resides in the cytoplasm. It catalyses the reaction N(7)-methyl-GTP + H2O = N(7)-methyl-GMP + diphosphate + H(+). Its function is as follows. Nucleoside triphosphate pyrophosphatase that hydrolyzes 7-methyl-GTP (m(7)GTP). May have a dual role in cell division arrest and in preventing the incorporation of modified nucleotides into cellular nucleic acids. The protein is 7-methyl-GTP pyrophosphatase (maf-2) of Brucella suis biovar 1 (strain 1330).